Reading from the N-terminus, the 1190-residue chain is PAN2-PAN3 deadenylation complex catalytic subunit PAN2 (1190 aa).

WD repeat units follow at residues Thr-24 to Tyr-63, Asn-129 to Leu-166, Ser-167 to Thr-207, Gly-222 to Pro-264, Pro-266 to Leu-306, and Asn-322 to Val-361. Residues Pro-364–Asn-511 form a linker region. The USP domain maps to Lys-512–Thr-924. Positions Val-988 to Tyr-1158 constitute an Exonuclease domain. The a divalent metal cation site is built by Asp-991, Glu-993, Asp-1097, and Asp-1150.

The protein belongs to the peptidase C19 family. PAN2 subfamily. As to quaternary structure, forms a heterotrimer with an asymmetric homodimer of the regulatory subunit PAN3 to form the poly(A)-nuclease (PAN) deadenylation complex. A divalent metal cation is required as a cofactor.

The protein localises to the cytoplasm. The enzyme catalyses Exonucleolytic cleavage of poly(A) to 5'-AMP.. With respect to regulation, positively regulated by the regulatory subunit PAN3. Its function is as follows. Catalytic subunit of the poly(A)-nuclease (PAN) deadenylation complex, one of two cytoplasmic mRNA deadenylases involved in mRNA turnover. PAN specifically shortens poly(A) tails of RNA and the activity is stimulated by poly(A)-binding protein PAB1. PAN deadenylation is followed by rapid degradation of the shortened mRNA tails by the CCR4-NOT complex. Deadenylated mRNAs are then degraded by two alternative mechanisms, namely exosome-mediated 3'-5' exonucleolytic degradation, or deadenylation-dependent mRNA decaping and subsequent 5'-3' exonucleolytic degradation by XRN1. May also be involved in post-transcriptional maturation of mRNA poly(A) tails. This is PAN2-PAN3 deadenylation complex catalytic subunit PAN2 from Candida albicans (strain SC5314 / ATCC MYA-2876) (Yeast).